A 544-amino-acid polypeptide reads, in one-letter code: Putative glycerol-3-phosphate transporter 4 (544 aa).

Helical transmembrane passes span 28 to 47 (TFRY…YHAS), 121 to 141 (VAFL…GDSL), 156 to 176 (FFVG…WFFL), 181 to 201 (AAGL…GNWF), 218 to 238 (SVGN…GWGW), and 240 to 260 (FIAP…FLAA). The interval 281–313 (KRDVEEEEEEVEEDLGTDVEGDGEGSSGSGSGY) is disordered. Positions 285-303 (EEEEEEVEEDLGTDVEGDG) are enriched in acidic residues. A run of 7 helical transmembrane segments spans residues 319–339 (VGLL…CLFF), 342–362 (LVAY…TIGG), 371–391 (GNLS…CGYI), 402–422 (AAAF…YGGV), 428–448 (ILLM…ITTA), 471–491 (AIID…TGFL), and 494–514 (LGWQ…GLLL).

It belongs to the major facilitator superfamily. Organophosphate:Pi antiporter (OPA) (TC 2.A.1.4) family.

It is found in the membrane. This is Putative glycerol-3-phosphate transporter 4 from Arabidopsis thaliana (Mouse-ear cress).